The following is a 273-amino-acid chain: Peroxiredoxin-4 (273 aa).

Residues 1–40 (METWSKLLDGTTPSRRWRKLVLLLPPLLLFLLQTEALQGL) form the signal peptide. Positions 81-239 (AKISKPAPYW…TLRLVQAFQY (159 aa)) constitute a Thioredoxin domain. Residue Cys126 is the Cysteine sulfenic acid (-SOH) intermediate of the active site.

The protein belongs to the peroxiredoxin family. AhpC/Prx1 subfamily. Homodimer; disulfide-linked, upon oxidation. 5 homodimers assemble to form a ring-like decamer. The enzyme can be inactivated by further oxidation of the cysteine sulfenic acid (C(P)-SOH) to sulphinic acid (C(P)-SO2H) and sulphonic acid (C(P)-SO3H) instead of its condensation to a disulfide bond.

It is found in the cytoplasm. The protein resides in the endoplasmic reticulum. Its subcellular location is the secreted. The enzyme catalyses a hydroperoxide + [thioredoxin]-dithiol = an alcohol + [thioredoxin]-disulfide + H2O. In terms of biological role, thiol-specific peroxidase that catalyzes the reduction of hydrogen peroxide and organic hydroperoxides to water and alcohols, respectively. Plays a role in cell protection against oxidative stress by detoxifying peroxides and as sensor of hydrogen peroxide-mediated signaling events. Regulates the activation of NF-kappa-B in the cytosol by a modulation of I-kappa-B-alpha phosphorylation. The protein is Peroxiredoxin-4 (Prdx4) of Rattus norvegicus (Rat).